The primary structure comprises 309 residues: 2-phospho-L-lactate transferase (309 aa).

2 residues coordinate 7,8-didemethyl-8-hydroxy-5-deazariboflavin: Asp-50 and Lys-89.

Belongs to the CofD family. In terms of assembly, homodimer. Requires Mg(2+) as cofactor.

The enzyme catalyses (2S)-lactyl-2-diphospho-5'-guanosine + 7,8-didemethyl-8-hydroxy-5-deazariboflavin = oxidized coenzyme F420-0 + GMP + H(+). Its pathway is cofactor biosynthesis; coenzyme F420 biosynthesis. In terms of biological role, catalyzes the transfer of the 2-phospholactate moiety from (2S)-lactyl-2-diphospho-5'-guanosine to 7,8-didemethyl-8-hydroxy-5-deazariboflavin (FO) with the formation of oxidized coenzyme F420-0 and GMP. The protein is 2-phospho-L-lactate transferase of Methanococcus maripaludis (strain C5 / ATCC BAA-1333).